Reading from the N-terminus, the 237-residue chain is Uridylate kinase (237 aa).

12–15 (KLSG) is an ATP binding site. The interval 20 to 25 (GENGFG) is involved in allosteric activation by GTP. Gly-54 is a UMP binding site. Gly-55 and Arg-59 together coordinate ATP. UMP contacts are provided by residues Asp-72 and 133 to 140 (TGNPYFST). ATP contacts are provided by Tyr-166 and Asp-169.

This sequence belongs to the UMP kinase family. As to quaternary structure, homohexamer.

Its subcellular location is the cytoplasm. It catalyses the reaction UMP + ATP = UDP + ADP. The protein operates within pyrimidine metabolism; CTP biosynthesis via de novo pathway; UDP from UMP (UMPK route): step 1/1. With respect to regulation, allosterically activated by GTP. Inhibited by UTP. Catalyzes the reversible phosphorylation of UMP to UDP. The polypeptide is Uridylate kinase (Clostridium perfringens (strain ATCC 13124 / DSM 756 / JCM 1290 / NCIMB 6125 / NCTC 8237 / Type A)).